A 133-amino-acid polypeptide reads, in one-letter code: ATP synthase epsilon chain (133 aa).

The protein belongs to the ATPase epsilon chain family. F-type ATPases have 2 components, CF(1) - the catalytic core - and CF(0) - the membrane proton channel. CF(1) has five subunits: alpha(3), beta(3), gamma(1), delta(1), epsilon(1). CF(0) has three main subunits: a, b and c.

It localises to the cell membrane. Produces ATP from ADP in the presence of a proton gradient across the membrane. The polypeptide is ATP synthase epsilon chain (Clostridium botulinum (strain 657 / Type Ba4)).